Reading from the N-terminus, the 334-residue chain is Ethanol acetyltransferase 1 (334 aa).

The N-terminal 16 residues, 1 to 16 (MFASNVVVLNKRSIRF), are a transit peptide targeting the mitochondrion. Residues S124, D148, and H296 each act as charge relay system in the active site.

It belongs to the AB hydrolase superfamily.

It is found in the mitochondrion. It carries out the reaction ethanol + acetyl-CoA = ethyl acetate + CoA. The enzyme catalyses acetyl-CoA + H2O = acetate + CoA + H(+). The catalysed reaction is ethyl acetate + H2O = ethanol + acetate + H(+). Functionally, alcohol acetyltransferase that catalyzes the synthesis of ethyl acetate from ethanol and acetyl-CoA. Can also function as a thioesterase by hydrolyzing acetyl-CoA in the absence of ethanol, as well as esterase hydrolyzing ethyl acetate. This is Ethanol acetyltransferase 1 (EAT1) from Hanseniaspora uvarum (Yeast).